A 500-amino-acid polypeptide reads, in one-letter code: Cryptochrome DASH (500 aa).

In terms of domain architecture, Photolyase/cryptochrome alpha/beta spans 4–138 (KTVLVWYRND…PVRSFWGTTL (135 aa)).

This sequence belongs to the DNA photolyase class-1 family. The cofactor is FAD. Requires (6R)-5,10-methylene-5,6,7,8-tetrahydrofolate as cofactor.

Functionally, may have a photoreceptor function. Binds DNA; probably functions as a transcriptional repressor. This Gloeobacter violaceus (strain ATCC 29082 / PCC 7421) protein is Cryptochrome DASH (cry).